Reading from the N-terminus, the 1514-residue chain is Neurexin-1 (1514 aa).

Positions 1–30 (MGTALVQRGGCCLLCLSLLLLGCWAELGSG) are cleaved as a signal peptide. The 187-residue stretch at 31–217 (LEFPGAEGQW…PPNSGGGSPC (187 aa)) folds into the Laminin G-like 1 domain. Over 31-1438 (LEFPGAEGQW…EVIRESSSTT (1408 aa)) the chain is Extracellular. Asn-125 and Asn-190 each carry an N-linked (GlcNAc...) asparagine glycan. The tract at residues 197 to 221 (VDGGEVKLDDEPPNSGGGSPCEAGE) is disordered. One can recognise an EGF-like 1 domain in the interval 219–256 (AGEEGEGGVCLNGGVCSVVDDQAVCDCSRTGFRGKDCS). 2 cysteine pairs are disulfide-bonded: Cys-228–Cys-243 and Cys-245–Cys-255. Laminin G-like domains lie at 283 to 480 (IATF…AFKC) and 487 to 679 (DPIT…KPSC). Residues Asp-329, Leu-346, and Met-414 each contribute to the Ca(2+) site. Cystine bridges form between Cys-444-Cys-480, Cys-650-Cys-679, Cys-687-Cys-698, Cys-692-Cys-707, and Cys-709-Cys-719. One can recognise an EGF-like 2 domain in the interval 683–720 (TAKPCLSNPCKNNGMCRDGWNRYVCDCSGTGYLGRSCE). Laminin G-like domains follow at residues 725–898 (VLSY…IDYC) and 912–1087 (DPVT…ERGC). 2 residues coordinate Ca(2+): Asp-772 and Leu-789. A glycan (N-linked (GlcNAc...) asparagine) is linked at Asn-797. Residue Arg-848 coordinates Ca(2+). Disulfide bonds link Cys-890–Cys-898, Cys-1059–Cys-1087, Cys-1094–Cys-1105, Cys-1099–Cys-1114, and Cys-1116–Cys-1126. Positions 1090–1127 (PSTTCQEDSCSNQGVCLQQWDGFSCDCSMTSFSGPLCN) constitute an EGF-like 3 domain. In terms of domain architecture, Laminin G-like 6 spans 1133–1331 (YIFSKGGGQI…DANIAIVGNV (199 aa)). Ca(2+) is bound by residues Asp-1183 and Val-1200. N-linked (GlcNAc...) asparagine glycosylation occurs at Asn-1230. Ca(2+)-binding residues include Ile-1282 and Asn-1284. Ser-1392 carries O-linked (Xyl...) (heparan sulfate) serine glycosylation. Positions 1396–1427 (PSDDEDIDPCEPSSGGLANPTRVGGREPYPGS) are disordered. The chain crosses the membrane as a helical span at residues 1439 to 1459 (GMVVGIVAAAALCILILLYAM). At 1460–1514 (YKYRNRDEGSYHVDESRNYISNSAQSNGAVVKEKQPSSAKSANKNKKNKDKEYYV) the chain is on the cytoplasmic side. Residues 1481–1507 (NSAQSNGAVVKEKQPSSAKSANKNKKN) form an interaction with CASK region. Positions 1481-1514 (NSAQSNGAVVKEKQPSSAKSANKNKKNKDKEYYV) are disordered.

This sequence belongs to the neurexin family. Interacts (via laminin G-like domain 2 and/or laminin G-like domain 6) with NLGN1 forming a heterotetramer, where one NLGN1 dimer interacts with one NRXN1 dimer. Also interacts (via laminin G-like domain 2 and/or laminin G-like domain 6) with NLGN2, NLGN3 and NLGN4L; interactions with NLGN1, NLGN2, NLGN3 and NLGN4L are calcium-dependent. Interacts (via cytoplasmic C-terminal region) with CASK (via the PDZ, SH3 and guanylate kinase-like domains). Interacts (via cytoplasmic C-terminus) with CASKIN1 and APBA1. Interacts (via laminin G-like domain 2) with NXPH1 and NXPH3. Alpha-type isoforms (neurexin-1-alpha) interact (via laminin G-like domain 2 and/or laminin G-like domain 6) with DAG1 (via alpha-dystroglycan chain). Interacts with LRRTM1, LRRTM2, LRRTM3 and LRRTM4. Interacts with SYT13 and SYTL1. Interacts with CBLN1, CBLN2 and, less avidly, with CBLN4. Interacts with CLSTN3. O-glycosylated; contains heparan sulfate. Heparan sulfate attachment is required for synapse development by mediating interactions with neuroligins and LRRTM2.

It localises to the presynaptic cell membrane. In terms of biological role, cell surface protein involved in cell-cell-interactions, exocytosis of secretory granules and regulation of signal transmission. Function is isoform-specific. Alpha-type isoforms have a long N-terminus with six laminin G-like domains and play an important role in synaptic signal transmission. Alpha-type isoforms play a role in the regulation of calcium channel activity and Ca(2+)-triggered neurotransmitter release at synapses and at neuromuscular junctions. They play an important role in Ca(2+)-triggered exocytosis of secretory granules in pituitary gland. They may affect their functions at synapses and in endocrine cells via their interactions with proteins from the exocytotic machinery. Likewise, alpha-type isoforms play a role in regulating the activity of postsynaptic NMDA receptors, a subtype of glutamate-gated ion channels. Both alpha-type and beta-type isoforms may play a role in the formation or maintenance of synaptic junctions via their interactions (via the extracellular domains) with neuroligin family members, CBLN1 or CBLN2. In vitro, triggers the de novo formation of presynaptic structures. May be involved in specification of excitatory synapses. Alpha-type isoforms were first identified as receptors for alpha-latrotoxin from spider venom. The sequence is that of Neurexin-1 (Nrxn1) from Mus musculus (Mouse).